Reading from the N-terminus, the 287-residue chain is ATP synthase gamma chain (287 aa).

Belongs to the ATPase gamma chain family. In terms of assembly, F-type ATPases have 2 components, CF(1) - the catalytic core - and CF(0) - the membrane proton channel. CF(1) has five subunits: alpha(3), beta(3), gamma(1), delta(1), epsilon(1). CF(0) has three main subunits: a, b and c.

Its subcellular location is the cell inner membrane. Its function is as follows. Produces ATP from ADP in the presence of a proton gradient across the membrane. The gamma chain is believed to be important in regulating ATPase activity and the flow of protons through the CF(0) complex. This Photorhabdus laumondii subsp. laumondii (strain DSM 15139 / CIP 105565 / TT01) (Photorhabdus luminescens subsp. laumondii) protein is ATP synthase gamma chain.